Consider the following 30-residue polypeptide: Brevinin-2Rj (30 aa).

A disulfide bond links C24 and C30.

Expressed by the skin glands.

The protein localises to the secreted. Antimicrobial peptide. The chain is Brevinin-2Rj from Pelophylax ridibundus (Marsh frog).